The primary structure comprises 239 residues: Mannose-binding protein A (239 aa).

The signal sequence occupies residues 1-18 (MLLLPLLPVLLCVVSVSS). Positions 35–88 (ACGRDGRDGPKGEKGEPGQGLRGLQGPPGKLGPPGSVGSPGSPGPKGQKGDHGD) are disordered. A Collagen-like domain is found at 37-89 (GRDGRDGPKGEKGEPGQGLRGLQGPPGKLGPPGSVGSPGSPGPKGQKGDHGDN). The span at 38–50 (RDGRDGPKGEKGE) shows a compositional bias: basic and acidic residues. Pro44 carries the 4-hydroxyproline modification. A 5-hydroxylysine mark is found at Lys45 and Lys48. 2 O-linked (Gal...) hydroxylysine glycosylation sites follow: Lys45 and Lys48. A 4-hydroxyproline mark is found at Pro51, Pro62, Pro68, Pro74, and Pro79. Positions 58-74 (LQGPPGKLGPPGSVGSP) are enriched in low complexity. Lys80 and Lys83 each carry 5-hydroxylysine. O-linked (Gal...) hydroxylysine glycans are attached at residues Lys80 and Lys83. A C-type lectin domain is found at 144–239 (SLCTELQGTV…SFKAVCEFPA (96 aa)). Disulfide bonds link Cys146–Cys235 and Cys213–Cys227. 8 residues coordinate Ca(2+): Asp179, Glu183, Glu203, Asn205, Glu211, Asp212, Asn223, and Asp224. The segment at 203 to 211 (EPNNHGSGE) is calcium-dependent carbohydrate binding.

Homotrimer. Forms higher oligomeric complexes formed by the association of two, three or more homotrimers. Oligomerization occurs in the endoplasmic reticulum. Interacts with MASP1 and MASP2. Hydroxylated on lysine and proline residues within the collagen-like domain. In terms of processing, O-glycosylated. O-linked glycans on hydroxylysine residues consist of Glc-Gal disaccharides bound to the oxygen atom of post-translationally added hydroxyl groups. In terms of tissue distribution, detected in liver and blood serum (at protein level). Detected in liver.

It localises to the secreted. Functionally, calcium-dependent lectin. Plays a role in the innate immune response by binding mannose, fucose and N-acetylglucosamine moieties on different microorganisms and mediating activation of the lectin complement pathway. Binds to late apoptotic cells, as well as to apoptotic blebs and to necrotic cells, but not to early apoptotic cells, facilitating their uptake by macrophages. The sequence is that of Mannose-binding protein A (Mbl1) from Mus musculus (Mouse).